A 109-amino-acid chain; its full sequence is Protein reprimo (109 aa).

2 N-linked (GlcNAc...) asparagine glycosylation sites follow: Asn7 and Asn18. The helical transmembrane segment at 56–76 (VVQIAVMCVLSLTVVFGIFFL) threads the bilayer. Residue Ser98 is modified to Phosphoserine.

This sequence belongs to the reprimo family.

It localises to the cytoplasm. It is found in the membrane. May be involved in the regulation of p53-dependent G2 arrest of the cell cycle. Seems to induce cell cycle arrest by inhibiting CDK1 activity and nuclear translocation of the CDC2 cyclin B1 complex. This Rattus norvegicus (Rat) protein is Protein reprimo (Rprm).